We begin with the raw amino-acid sequence, 215 residues long: Sodium channel regulatory subunit beta-3 (215 aa).

The signal sequence occupies residues 1–22 (MPAFNRLFPLVSLVLIYWASVC). The Extracellular portion of the chain corresponds to 23 to 156 (FPVCVEVPSE…EEAGEDFTSV (134 aa)). An Ig-like C2-type domain is found at 24-138 (PVCVEVPSET…EAHRPFVKTT (115 aa)). Cystine bridges form between Cys-26-Cys-48 and Cys-45-Cys-120. Asn-95, Asn-109, Asn-113, and Asn-121 each carry an N-linked (GlcNAc...) asparagine glycan. Residues 157-178 (VSEIMMYILLVFLTLWLLIEMI) form a helical membrane-spanning segment. The Cytoplasmic portion of the chain corresponds to 179 to 215 (YCYRKVSKAEEAAQENASDYLAIPSENKENSAVPVEE).

The protein belongs to the sodium channel auxiliary subunit SCN3B (TC 8.A.17) family. A voltage-gated sodium (Nav) channel consists of an ion-conducting pore-forming alpha subunit functional on its own that is regulated by one or more beta subunits. Forms homodimers and homotrimers. SCN3B is non-covalently associated with alpha subunits and induces the formation of alpha subunit oligomers, including trimers. Interacts with SCN5A/Nav1.5; regulatory subunit of SCN5A/Nav1.5. Interacts with SCN7A/Nav2.1; probable regulatory subunit of SCN7A/Nav2.1. Interacts with SCN10A; regulatory subunit of SCN10A/Nav1.8. Interacts with NFASC; probably involved in targeting the sodium channels to the nodes of Ranvier. Intramolecular disulfide bonds favor the voltage-gated sodium channel oligomeric complex assembly. Post-translationally, N-glycosylated.

It localises to the cell membrane. In terms of biological role, regulatory subunit of multiple voltage-gated sodium (Nav) channels directly mediating the depolarization of excitable membranes. Navs, also called VGSCs (voltage-gated sodium channels) or VDSCs (voltage-dependent sodium channels), operate by switching between closed and open conformations depending on the voltage difference across the membrane. In the open conformation they allow Na(+) ions to selectively pass through the pore, along their electrochemical gradient. The influx of Na+ ions provokes membrane depolarization, initiating the propagation of electrical signals throughout cells and tissues. The accessory beta subunits participate in localization and functional modulation of the Nav channels. Modulates the activity of SCN2A/Nav1.2, causing a hyperpolarizing shift in the voltage-dependence of inactivation of the channel and increasing the fraction of channels operating in the fast gating mode. Modulates the activity of SCN5A/Nav1.5. Could also regulate the atypical sodium channel SCN7A/Nav2.1. Modulates the activity of SCN10A/Nav1.8, regulating its oligomerization and accelerating the recovery from inactivation. In Macaca fascicularis (Crab-eating macaque), this protein is Sodium channel regulatory subunit beta-3.